A 338-amino-acid polypeptide reads, in one-letter code: MYNNNQNHHNNDNNMNKDEPTTIYPEFISISNEIKTNGSTNSYLNNIRREMLSMVNSGNNNNNNNNNNNNNNNNNNNNNNNNNDSIVINMDTINNNNNSNNIDINKSGYSQISNTTSNDNLNKTLLGNNEISQINDIDDDSSPEFIKYKKFISSLSYITFIGAAIVLINQKKSVYIQFHAYQSFYISMGVIGFQFLLIWSDILSIILWSLYLLFTIFMFLKVSFGGYGNSTIYKLPIIGNLSEQKAKLRSQEYSRYFKYHEDLFIKELREHKQALIHQSNLNRNNNNSNNVNNNGHQRINSNSSSVVMSGDVESMLNSSGSNSSIYSDVQNDIGTNEE.

The segment at 1 to 20 is disordered; it reads MYNNNQNHHNNDNNMNKDEP. The segment covering 9-20 has biased composition (basic and acidic residues); sequence HNNDNNMNKDEP. N-linked (GlcNAc...) asparagine glycans are attached at residues N37, N83, N97, N105, N114, and N122. The segment at 55 to 92 is disordered; that stretch reads VNSGNNNNNNNNNNNNNNNNNNNNNNNNNDSIVINMDT. Residues 59–92 are compositionally biased toward low complexity; the sequence is NNNNNNNNNNNNNNNNNNNNNNNNNDSIVINMDT. The next 3 membrane-spanning stretches (helical) occupy residues 148-168, 178-198, and 202-222; these read YKKFISSLSYITFIGAAIVLI, FHAYQSFYISMGVIGFQFLLI, and ILSIILWSLYLLFTIFMFLKV. N229, N240, N286, N302, N317, and N322 each carry an N-linked (GlcNAc...) asparagine glycan. Disordered regions lie at residues 279-303 and 316-338; these read SNLNRNNNNSNNVNNNGHQRINSNS and LNSSGSNSSIYSDVQNDIGTNEE. Positions 280 to 294 are enriched in low complexity; the sequence is NLNRNNNNSNNVNNN. Residues 316–327 are compositionally biased toward low complexity; sequence LNSSGSNSSIYS. Residues 328–338 show a composition bias toward polar residues; the sequence is DVQNDIGTNEE.

The protein resides in the membrane. This is an uncharacterized protein from Dictyostelium discoideum (Social amoeba).